The chain runs to 577 residues: Thiol:disulfide interchange protein DsbD (577 aa).

Positions 1–23 (MAQRIFTLIFLLWTAVGTPQVAA) are cleaved as a signal peptide. Intrachain disulfides connect Cys-131-Cys-137 and Cys-194-Cys-316. 7 consecutive transmembrane segments (helical) span residues 182–202 (ALLI…YPLI), 225–245 (YVQG…AAGL), 255–275 (YILI…FGLY), 308–328 (LAGL…LLYI), 338–358 (GGTL…VTLF), 369–389 (WMQY…VFLL), and 396–416 (AWGI…ALML). The Thioredoxin domain maps to 437–577 (VISAKPLQDW…FQAHLQKFSP (141 aa)). Cys-492 and Cys-495 are disulfide-bonded.

Belongs to the thioredoxin family. DsbD subfamily.

It is found in the cell inner membrane. The enzyme catalyses [protein]-dithiol + NAD(+) = [protein]-disulfide + NADH + H(+). It carries out the reaction [protein]-dithiol + NADP(+) = [protein]-disulfide + NADPH + H(+). Functionally, required to facilitate the formation of correct disulfide bonds in some periplasmic proteins and for the assembly of the periplasmic c-type cytochromes. Acts by transferring electrons from cytoplasmic thioredoxin to the periplasm. This transfer involves a cascade of disulfide bond formation and reduction steps. This chain is Thiol:disulfide interchange protein DsbD, found in Pectobacterium atrosepticum (strain SCRI 1043 / ATCC BAA-672) (Erwinia carotovora subsp. atroseptica).